A 359-amino-acid polypeptide reads, in one-letter code: Pyruvate dehydrogenase E1 component subunit beta, mitochondrial (359 aa).

Residues 1–30 constitute a mitochondrion transit peptide; sequence MAVVAVLVRKPLEQVSGLLRRRFHRTAPAA. Residue Y67 is modified to Phosphotyrosine. Position 89 (E89) interacts with thiamine diphosphate. Residues I142, A190, I191, D193, and N195 each coordinate K(+). K354 bears the N6-acetyllysine mark.

As to quaternary structure, heterotetramer of two PDHA1 and two PDHB subunits. The heterotetramer interacts with DLAT, and is part of the multimeric pyruvate dehydrogenase complex that contains multiple copies of pyruvate dehydrogenase (E1), dihydrolipoamide acetyltransferase (DLAT, E2) and lipoamide dehydrogenase (DLD, E3). These subunits are bound to an inner core composed of about 48 DLAT and 12 PDHX molecules. Interacts with DLAT. Requires thiamine diphosphate as cofactor.

It localises to the mitochondrion matrix. It catalyses the reaction N(6)-[(R)-lipoyl]-L-lysyl-[protein] + pyruvate + H(+) = N(6)-[(R)-S(8)-acetyldihydrolipoyl]-L-lysyl-[protein] + CO2. Functionally, the pyruvate dehydrogenase complex catalyzes the overall conversion of pyruvate to acetyl-CoA and CO(2), and thereby links the glycolytic pathway to the tricarboxylic cycle. The polypeptide is Pyruvate dehydrogenase E1 component subunit beta, mitochondrial (PDHB) (Bos taurus (Bovine)).